The primary structure comprises 1034 residues: Condensin complex subunit 3 (1034 aa).

HEAT repeat units lie at residues S95–E132, D139–P176, C178–K213, L242–E279, D281–N317, T439–T476, and D618–M655. Residues T663 to A672 are compositionally biased toward polar residues. The segment at T663–L693 is disordered. HEAT repeat units follow at residues A703–L740, C785–R823, and E878–E915. The segment covering Q909 to A949 has biased composition (basic and acidic residues). Residues Q909–N1034 form a disordered region. The segment covering R964–A984 has biased composition (basic residues). Residues S985–E999 show a composition bias toward basic and acidic residues.

This sequence belongs to the CND3 (condensin subunit 3) family. As to quaternary structure, component of the condensin complex, which contains the XCAP-E/SMC2 and XCAP-C/SMC4 heterodimer, and three non SMC subunits that probably regulate the complex: XCAP-H/NCAPH, XCAP-D2/NCAPD2 and XCAP-G/NCAPG. Phosphorylated by cdk1. Its phosphorylation, as well as that of XCAP-D2 and XCAP-H subunits, activates the condensin complex and is required for chromosome condensation.

The protein resides in the nucleus. It localises to the cytoplasm. It is found in the chromosome. Regulatory subunit of the condensin complex, a complex required for conversion of interphase chromatin into mitotic-like condense chromosomes. The condensin complex probably introduces positive supercoils into relaxed DNA in the presence of type I topoisomerases and converts nicked DNA into positive knotted forms in the presence of type II topoisomerase. This chain is Condensin complex subunit 3 (ncapg), found in Xenopus laevis (African clawed frog).